Here is a 494-residue protein sequence, read N- to C-terminus: Ketol-acid reductoisomerase (NADP(+)) (494 aa).

The region spanning 14-208 is the KARI N-terminal Rossmann domain; the sequence is LDQLGRCRFM…GGHRAGCLES (195 aa). Residues 45–48, arginine 68, arginine 76, serine 78, and 108–110 contribute to the NADP(+) site; these read CGAQ and DKQ. Histidine 132 is a catalytic residue. Position 158 (glycine 158) interacts with NADP(+). 2 consecutive KARI C-terminal knotted domains span residues 209 to 344 and 345 to 487; these read SFVA…NYPD and SSLE…MTDM. The Mg(2+) site is built by aspartate 217, glutamate 221, glutamate 389, and glutamate 393. Serine 414 is a binding site for substrate.

This sequence belongs to the ketol-acid reductoisomerase family. It depends on Mg(2+) as a cofactor.

It carries out the reaction (2R)-2,3-dihydroxy-3-methylbutanoate + NADP(+) = (2S)-2-acetolactate + NADPH + H(+). The enzyme catalyses (2R,3R)-2,3-dihydroxy-3-methylpentanoate + NADP(+) = (S)-2-ethyl-2-hydroxy-3-oxobutanoate + NADPH + H(+). The protein operates within amino-acid biosynthesis; L-isoleucine biosynthesis; L-isoleucine from 2-oxobutanoate: step 2/4. Its pathway is amino-acid biosynthesis; L-valine biosynthesis; L-valine from pyruvate: step 2/4. Functionally, involved in the biosynthesis of branched-chain amino acids (BCAA). Catalyzes an alkyl-migration followed by a ketol-acid reduction of (S)-2-acetolactate (S2AL) to yield (R)-2,3-dihydroxy-isovalerate. In the isomerase reaction, S2AL is rearranged via a Mg-dependent methyl migration to produce 3-hydroxy-3-methyl-2-ketobutyrate (HMKB). In the reductase reaction, this 2-ketoacid undergoes a metal-dependent reduction by NADPH to yield (R)-2,3-dihydroxy-isovalerate. The polypeptide is Ketol-acid reductoisomerase (NADP(+)) (Aliivibrio salmonicida (strain LFI1238) (Vibrio salmonicida (strain LFI1238))).